We begin with the raw amino-acid sequence, 424 residues long: Alkaline nuclease (424 aa).

It belongs to the baculo-herpesviridae alkaline nuclease family. In terms of assembly, interacts with LEF-3.

The protein localises to the host nucleus. May play a role in maturation and encapsidation of viral replicated genome, by promoting DNA homologous recombination. Exhibits endonuclease and 5'-&gt;3' exonuclease activities. The endonuclease activity displays a specificity for ssDNA in vitro. This is Alkaline nuclease (ALK-EXO) from Orgyia pseudotsugata (Douglas-fir tussock moth).